The following is a 367-amino-acid chain: Anhydro-N-acetylmuramic acid kinase (367 aa).

11-18 (GTSLDGVD) lines the ATP pocket.

It belongs to the anhydro-N-acetylmuramic acid kinase family.

The enzyme catalyses 1,6-anhydro-N-acetyl-beta-muramate + ATP + H2O = N-acetyl-D-muramate 6-phosphate + ADP + H(+). It functions in the pathway amino-sugar metabolism; 1,6-anhydro-N-acetylmuramate degradation. The protein operates within cell wall biogenesis; peptidoglycan recycling. Its function is as follows. Catalyzes the specific phosphorylation of 1,6-anhydro-N-acetylmuramic acid (anhMurNAc) with the simultaneous cleavage of the 1,6-anhydro ring, generating MurNAc-6-P. Is required for the utilization of anhMurNAc either imported from the medium or derived from its own cell wall murein, and thus plays a role in cell wall recycling. The polypeptide is Anhydro-N-acetylmuramic acid kinase (Bradyrhizobium diazoefficiens (strain JCM 10833 / BCRC 13528 / IAM 13628 / NBRC 14792 / USDA 110)).